The primary structure comprises 363 residues: Flagellar P-ring protein 2 (363 aa).

The first 20 residues, 1–20 (MKLRTCCISLMLLLALPLQA), serve as a signal peptide directing secretion.

Belongs to the FlgI family. The basal body constitutes a major portion of the flagellar organelle and consists of four rings (L,P,S, and M) mounted on a central rod.

The protein resides in the periplasm. The protein localises to the bacterial flagellum basal body. In terms of biological role, assembles around the rod to form the L-ring and probably protects the motor/basal body from shearing forces during rotation. This is Flagellar P-ring protein 2 from Photobacterium profundum (strain SS9).